A 373-amino-acid chain; its full sequence is Glutamate 5-kinase (373 aa).

ATP is bound at residue Lys-16. Substrate contacts are provided by Ser-56, Asp-143, and Asn-155. 175–176 (TD) lines the ATP pocket. The PUA domain maps to 281–359 (RGRLTLDDGA…SRIDSLLGYK (79 aa)).

This sequence belongs to the glutamate 5-kinase family.

It localises to the cytoplasm. It catalyses the reaction L-glutamate + ATP = L-glutamyl 5-phosphate + ADP. It participates in amino-acid biosynthesis; L-proline biosynthesis; L-glutamate 5-semialdehyde from L-glutamate: step 1/2. Functionally, catalyzes the transfer of a phosphate group to glutamate to form L-glutamate 5-phosphate. The sequence is that of Glutamate 5-kinase from Saccharophagus degradans (strain 2-40 / ATCC 43961 / DSM 17024).